The sequence spans 231 residues: Female protein (231 aa).

Positions 1-19 (MDKMLLLLGVSILLSEVFA) are cleaved as a signal peptide. Residues 24 to 223 (TGKVFVFPRE…YAVIRPRCVA (200 aa)) enclose the Pentraxin (PTX) domain. Residue asparagine 51 is glycosylated (N-linked (GlcNAc...) asparagine). Cysteines 55 and 114 form a disulfide. 6 residues coordinate Ca(2+): aspartate 77, asparagine 78, glutamate 155, glutamine 156, aspartate 157, and glutamine 167.

This sequence belongs to the pentraxin family. Homopentamer. Pentraxin (or pentaxin) have a discoid arrangement of 5 non-covalently bound subunits. Ca(2+) is required as a cofactor.

It localises to the secreted. In Nothocricetulus migratorius (Gray dwarf hamster), this protein is Female protein.